A 166-amino-acid polypeptide reads, in one-letter code: MLSKELLAALNEQMNQEYFAAHAYMAMAAYCDKESYDGFANFYIEQAKEERFHGKKIYDYINDRGEHAIFDTIKAPKVEFSSILETFKDSLAQERDVTQRFYNLSELARNDKDYATISFLNWFLDEQVEEESTFETHIDYLTRIGDDCNTLYLYEKELAARSFNEQ.

The region spanning 2-145 is the Ferritin-like diiron domain; sequence LSKELLAALN…THIDYLTRIG (144 aa). 5 residues coordinate Fe cation: Glu17, Glu50, His53, Glu94, and Gln127.

This sequence belongs to the ferritin family. Prokaryotic subfamily.

Its subcellular location is the cytoplasm. It catalyses the reaction 4 Fe(2+) + O2 + 6 H2O = 4 iron(III) oxide-hydroxide + 12 H(+). Iron-storage protein. The sequence is that of Bacterial non-heme ferritin (ftnA) from Staphylococcus epidermidis (strain ATCC 12228 / FDA PCI 1200).